We begin with the raw amino-acid sequence, 565 residues long: NAD-dependent malic enzyme (565 aa).

Tyr-103 acts as the Proton donor in catalysis. Catalysis depends on Lys-177, which acts as the Proton acceptor. Residues Glu-248, Asp-249, and Asp-272 each coordinate a divalent metal cation. Positions 272 and 419 each coordinate NAD(+). Ser-445 bears the Phosphoserine mark.

The protein belongs to the malic enzymes family. It depends on Mg(2+) as a cofactor. The cofactor is Mn(2+).

The catalysed reaction is (S)-malate + NAD(+) = pyruvate + CO2 + NADH. It carries out the reaction oxaloacetate + H(+) = pyruvate + CO2. This Schizosaccharomyces pombe (strain 972 / ATCC 24843) (Fission yeast) protein is NAD-dependent malic enzyme (mae2).